A 356-amino-acid polypeptide reads, in one-letter code: Alternative oxidase, mitochondrial (356 aa).

A helical transmembrane segment spans residues 152 to 172; sequence VIRFIFLETVAGVPGMVGGML. Residues glutamate 159, glutamate 198, and histidine 201 each contribute to the Fe cation site. The chain crosses the membrane as a helical span at residues 217-237; the sequence is LMVLGAQGVFFNGFFISYLIS. Positions 249, 304, and 307 each coordinate Fe cation. Positions 330–356 are disordered; that stretch reads YDNPEAPHPTKSAEIVKPTGWERDEVI.

The protein belongs to the alternative oxidase family. Fe cation serves as cofactor.

The protein localises to the mitochondrion inner membrane. Its function is as follows. Catalyzes cyanide-resistant oxygen consumption. May increase respiration when the cytochrome respiratory pathway is restricted, or in response to low temperatures. In Ajellomyces capsulatus (Darling's disease fungus), this protein is Alternative oxidase, mitochondrial (AOX1).